Reading from the N-terminus, the 263-residue chain is Putative inactive caspase B (263 aa).

Residues 1-8 (MMCEDASD) constitute a propeptide, removed in mature form by cps-1 or ced-3.

It belongs to the peptidase C14A family. In terms of assembly, interacts with ced-3 (via large subunit p17 or small subunit p13); the interaction inhibits ced-3 autoactivation. In terms of processing, cleavage by csp-1 isoform b or ced-3 removes the propeptide and generates subunit p31 in vitro. An additional cleavage at Asp-149 generates the 2 subunits p17 and p14 but this cleavage appears to be less efficient. In terms of tissue distribution, specifically expressed in the hermaphrodite germline.

The protein localises to the cytoplasm. In terms of biological role, putative inactive caspase. In the germline, binds caspase ced-3 zymogen and prevents ced-3 autoactivation. Does not affect the caspase activity of mature ced-3 and ced-4-mediated mature ced-3 activation. Negatively regulates germline apoptosis by inhibiting autocleavage of caspase ced-3. Involved in fertility. Functionally, putative inactive caspase. Dispensable for the inhibition of germline apoptosis. The sequence is that of Putative inactive caspase B from Caenorhabditis elegans.